Consider the following 434-residue polypeptide: Tol-Pal system protein TolB (434 aa).

An N-terminal signal peptide occupies residues 1-24; it reads MKFSAYLTTLFIVLFSLFIQTVQA.

It belongs to the TolB family. The Tol-Pal system is composed of five core proteins: the inner membrane proteins TolA, TolQ and TolR, the periplasmic protein TolB and the outer membrane protein Pal. They form a network linking the inner and outer membranes and the peptidoglycan layer.

The protein localises to the periplasm. Part of the Tol-Pal system, which plays a role in outer membrane invagination during cell division and is important for maintaining outer membrane integrity. In Histophilus somni (strain 2336) (Haemophilus somnus), this protein is Tol-Pal system protein TolB.